We begin with the raw amino-acid sequence, 107 residues long: Heme-degrading monooxygenase (107 aa).

In terms of domain architecture, ABM spans 2–94 (IIVTNTAKIT…YILDNKITYY (93 aa)). Asparagine 6 contacts Fe cation. Residue histidine 76 coordinates heme.

Belongs to the antibiotic biosynthesis monooxygenase family. Heme-degrading monooxygenase IsdG subfamily. As to quaternary structure, homodimer.

It localises to the cytoplasm. It catalyses the reaction heme b + 3 reduced [NADPH--hemoprotein reductase] + 3 O2 = biliverdin IXalpha + CO + Fe(2+) + 3 oxidized [NADPH--hemoprotein reductase] + 3 H2O + H(+). Its function is as follows. Allows bacterial pathogens to use the host heme as an iron source. Catalyzes the oxidative degradation of the heme macrocyclic porphyrin ring to the biliverdin in the presence of a suitable electron donor such as ascorbate or NADPH--cytochrome P450 reductase, with subsequent release of free iron. The protein is Heme-degrading monooxygenase of Bacillus thuringiensis subsp. konkukian (strain 97-27).